The primary structure comprises 29 residues: Cytochrome b6-f complex subunit 8 (29 aa).

Residues 3–23 form a helical membrane-spanning segment; sequence IISLAWAALMVVFTFSLSLVV.

This sequence belongs to the PetN family. As to quaternary structure, the 4 large subunits of the cytochrome b6-f complex are cytochrome b6, subunit IV (17 kDa polypeptide, PetD), cytochrome f and the Rieske protein, while the 4 small subunits are PetG, PetL, PetM and PetN. The complex functions as a dimer.

It is found in the plastid. The protein localises to the chloroplast thylakoid membrane. In terms of biological role, component of the cytochrome b6-f complex, which mediates electron transfer between photosystem II (PSII) and photosystem I (PSI), cyclic electron flow around PSI, and state transitions. The polypeptide is Cytochrome b6-f complex subunit 8 (Nicotiana tomentosiformis (Tobacco)).